We begin with the raw amino-acid sequence, 237 residues long: Lectin alpha chain (237 aa).

Residues glutamate 8 and aspartate 10 each coordinate Mn(2+). Residues aspartate 10, tyrosine 12, asparagine 14, and aspartate 19 each contribute to the Ca(2+) site. An a carbohydrate-binding site is contributed by tyrosine 12. Positions 19 and 24 each coordinate Mn(2+). An a carbohydrate-binding site is contributed by 99–100 (LY). Aspartate 208 is a binding site for Ca(2+). An a carbohydrate-binding site is contributed by arginine 228.

It belongs to the leguminous lectin family. As to quaternary structure, equilibrium between homodimer and homotetramer. Oligomerization is pH-dependent with homotetramers forming at pH 6.5 and above. In terms of processing, the beta and gamma chains are produced by partial proteolytic processing of the lectin alpha chain by an asparaginyl endopeptidase. Mixture of 60% alpha lectin and 40% of its beta and gamma proteolytic fragments. Seed.

The protein localises to the vacuole. It localises to the aleurone grain. Functionally, D-mannose/D-glucose-binding lectin. Has anti-inflammatory activity in rats. Induces histamine release in mast cells from hamster and rat. Induces lymphocyte proliferation and IFNG production. Shows toxicity against the aquatic snail B.glabrata at concentrations higher than 20 ug/ml. The protein is Lectin alpha chain of Dioclea virgata.